A 373-amino-acid polypeptide reads, in one-letter code: tRNA-specific 2-thiouridylase MnmA (373 aa).

ATP-binding positions include 12–19 (GMSGGVDS) and Met-38. The segment at 98 to 100 (NPD) is interaction with target base in tRNA. The Nucleophile role is filled by Cys-103. Cysteines 103 and 200 form a disulfide. Residue Gly-127 participates in ATP binding. An interaction with tRNA region spans residues 150–152 (KDQ). Catalysis depends on Cys-200, which acts as the Cysteine persulfide intermediate. The segment at 312 to 313 (RY) is interaction with tRNA.

This sequence belongs to the MnmA/TRMU family.

Its subcellular location is the cytoplasm. The catalysed reaction is S-sulfanyl-L-cysteinyl-[protein] + uridine(34) in tRNA + AH2 + ATP = 2-thiouridine(34) in tRNA + L-cysteinyl-[protein] + A + AMP + diphosphate + H(+). In terms of biological role, catalyzes the 2-thiolation of uridine at the wobble position (U34) of tRNA, leading to the formation of s(2)U34. The polypeptide is tRNA-specific 2-thiouridylase MnmA (Streptococcus pneumoniae (strain P1031)).